We begin with the raw amino-acid sequence, 140 residues long: Chorion class A protein Ld2/Ld41 (140 aa).

Positions Met1 to Ser21 are cleaved as a signal peptide.

This sequence belongs to the chorion protein family.

Its function is as follows. This protein is one of many from the eggshell of the gypsy moth. This chain is Chorion class A protein Ld2/Ld41, found in Lymantria dispar (Gypsy moth).